The sequence spans 97 residues: Large ribosomal subunit protein uL23 (97 aa).

Belongs to the universal ribosomal protein uL23 family. As to quaternary structure, part of the 50S ribosomal subunit. Contacts protein L29, and trigger factor when it is bound to the ribosome.

Its function is as follows. One of the early assembly proteins it binds 23S rRNA. One of the proteins that surrounds the polypeptide exit tunnel on the outside of the ribosome. Forms the main docking site for trigger factor binding to the ribosome. The chain is Large ribosomal subunit protein uL23 from Agrobacterium fabrum (strain C58 / ATCC 33970) (Agrobacterium tumefaciens (strain C58)).